The sequence spans 137 residues: Putative pre-16S rRNA nuclease (137 aa).

The protein belongs to the YqgF nuclease family.

The protein resides in the cytoplasm. Could be a nuclease involved in processing of the 5'-end of pre-16S rRNA. The polypeptide is Putative pre-16S rRNA nuclease (Chromobacterium violaceum (strain ATCC 12472 / DSM 30191 / JCM 1249 / CCUG 213 / NBRC 12614 / NCIMB 9131 / NCTC 9757 / MK)).